The sequence spans 131 residues: MNKQINIRKIQEKIKKIREKKIKFLRYDWDKFYRIGRQETWRKPKGIDNPVRLELKGYQPKVKIGFRSPREIRGLHPSGLIPFYVNNKKDLEKASQMKDKVIVVFSSTIGLKKKLELVEEAKKMGLKIANG.

It belongs to the eukaryotic ribosomal protein eL32 family.

The protein is Large ribosomal subunit protein eL32 (rpl32e) of Sulfurisphaera tokodaii (strain DSM 16993 / JCM 10545 / NBRC 100140 / 7) (Sulfolobus tokodaii).